Here is a 484-residue protein sequence, read N- to C-terminus: Ubiquinone biosynthesis monooxygenase COQ6, mitochondrial (484 aa).

Residues 1–41 constitute a mitochondrion transit peptide; that stretch reads MLSLAKAKLAVVGIGRQCVAVRTLNGARAVHRSFSSSEHDQ.

This sequence belongs to the UbiH/COQ6 family. In terms of assembly, component of a multi-subunit COQ enzyme complex, composed of at least coq3, coq4, coq5, coq6, coq7 and coq9. Interacts with coq8b and coq7. FAD is required as a cofactor.

It is found in the mitochondrion inner membrane. The protein resides in the golgi apparatus. The protein localises to the cell projection. The enzyme catalyses a 4-hydroxy-3-(all-trans-polyprenyl)benzoate + 2 reduced [2Fe-2S]-[ferredoxin] + O2 + 2 H(+) = a 3,4-dihydroxy-5-(all-trans-polyprenyl)benzoate + 2 oxidized [2Fe-2S]-[ferredoxin] + H2O. It carries out the reaction a 2-methoxy-6-(all-trans-polyprenyl)phenol + 2 reduced [2Fe-2S]-[ferredoxin] + O2 + 2 H(+) = a 2-methoxy-6-(all-trans-polyprenyl)benzene-1,4-diol + 2 oxidized [2Fe-2S]-[ferredoxin] + H2O. It functions in the pathway cofactor biosynthesis; ubiquinone biosynthesis. Functionally, FAD-dependent monooxygenase required for two non-consecutive steps during ubiquinone biosynthesis. Required for the C5-ring hydroxylation during ubiquinone biosynthesis by catalyzing the hydroxylation of 4-hydroxy-3-(all-trans-polyprenyl)benzoic acid to 3,4-dihydroxy-5-(all-trans-polyprenyl)benzoic acid. Also acts downstream of coq4, for the C1-hydroxylation during ubiquinone biosynthesis by catalyzing the hydroxylation of 2-methoxy-6-(all-trans-polyprenyl)phenol to 2-methoxy-6-(all-trans-polyprenyl)benzene-1,4-diol. The electrons required for the hydroxylation reaction are funneled indirectly to coq6 from NADPH via a ferredoxin/ferredoxin reductase system. The protein is Ubiquinone biosynthesis monooxygenase COQ6, mitochondrial of Danio rerio (Zebrafish).